Reading from the N-terminus, the 932-residue chain is Beta-mannosidase A (932 aa).

The N-terminal stretch at 1-21 (MRIREQTILALLSPGLPPVTG) is a signal peptide. 5 N-linked (GlcNAc...) asparagine glycosylation sites follow: N40, N248, N283, N317, and N348. E480 (proton donor) is an active-site residue. Residues N538, N609, N632, N659, N739, N762, and N791 are each glycosylated (N-linked (GlcNAc...) asparagine).

It belongs to the glycosyl hydrolase 2 family. Beta-mannosidase A subfamily. As to quaternary structure, homodimer.

Its subcellular location is the secreted. It carries out the reaction Hydrolysis of terminal, non-reducing beta-D-mannose residues in beta-D-mannosides.. It functions in the pathway glycan metabolism; N-glycan degradation. Exoglycosidase that cleaves the single beta-linked mannose residue from the non-reducing end of beta-mannosidic oligosaccharides of various complexity and length. Involved in the degradation of polymeric mannan and galactomannan. The protein is Beta-mannosidase A (mndA) of Aspergillus clavatus (strain ATCC 1007 / CBS 513.65 / DSM 816 / NCTC 3887 / NRRL 1 / QM 1276 / 107).